A 220-amino-acid chain; its full sequence is Pyrrolidone-carboxylate peptidase (220 aa).

Catalysis depends on residues Glu-80, Cys-143, and His-167.

The protein belongs to the peptidase C15 family. Homotetramer.

Its subcellular location is the cytoplasm. It carries out the reaction Release of an N-terminal pyroglutamyl group from a polypeptide, the second amino acid generally not being Pro.. Its function is as follows. Removes 5-oxoproline from various penultimate amino acid residues except L-proline. This chain is Pyrrolidone-carboxylate peptidase (pcp), found in Thermococcus litoralis (strain ATCC 51850 / DSM 5473 / JCM 8560 / NS-C).